Consider the following 108-residue polypeptide: Small ribosomal subunit protein bS6 (108 aa).

This sequence belongs to the bacterial ribosomal protein bS6 family.

Its function is as follows. Binds together with bS18 to 16S ribosomal RNA. The chain is Small ribosomal subunit protein bS6 from Nostoc sp. (strain PCC 7120 / SAG 25.82 / UTEX 2576).